The sequence spans 252 residues: 3-dehydroquinate dehydratase (252 aa).

Residues S21, 46–48 (EWR), and R82 contribute to the 3-dehydroquinate site. The active-site Proton donor/acceptor is H143. The Schiff-base intermediate with substrate role is filled by K170. The 3-dehydroquinate site is built by R213, S232, and Q236.

Belongs to the type-I 3-dehydroquinase family. In terms of assembly, homodimer.

The enzyme catalyses 3-dehydroquinate = 3-dehydroshikimate + H2O. The protein operates within metabolic intermediate biosynthesis; chorismate biosynthesis; chorismate from D-erythrose 4-phosphate and phosphoenolpyruvate: step 3/7. In terms of biological role, involved in the third step of the chorismate pathway, which leads to the biosynthesis of aromatic amino acids. Catalyzes the cis-dehydration of 3-dehydroquinate (DHQ) and introduces the first double bond of the aromatic ring to yield 3-dehydroshikimate. In Escherichia coli (strain SE11), this protein is 3-dehydroquinate dehydratase.